The following is a 186-amino-acid chain: UPF0398 protein LCA_0919 (186 aa).

This sequence belongs to the UPF0398 family.

This Latilactobacillus sakei subsp. sakei (strain 23K) (Lactobacillus sakei subsp. sakei) protein is UPF0398 protein LCA_0919.